Reading from the N-terminus, the 103-residue chain is Large ribosomal subunit protein bL21 (103 aa).

The protein belongs to the bacterial ribosomal protein bL21 family. In terms of assembly, part of the 50S ribosomal subunit. Contacts protein L20.

This protein binds to 23S rRNA in the presence of protein L20. This chain is Large ribosomal subunit protein bL21, found in Polynucleobacter necessarius subsp. necessarius (strain STIR1).